Here is a 153-residue protein sequence, read N- to C-terminus: Arginine repressor (153 aa).

The protein belongs to the ArgR family.

The protein localises to the cytoplasm. Its pathway is amino-acid biosynthesis; L-arginine biosynthesis [regulation]. Its function is as follows. Regulates arginine biosynthesis genes. The sequence is that of Arginine repressor from Acetivibrio thermocellus (strain ATCC 27405 / DSM 1237 / JCM 9322 / NBRC 103400 / NCIMB 10682 / NRRL B-4536 / VPI 7372) (Clostridium thermocellum).